Consider the following 107-residue polypeptide: Integration host factor subunit beta (107 aa).

Residues 87-107 (RERVNNGTRKNGGSADAASGG) form a disordered region.

It belongs to the bacterial histone-like protein family. In terms of assembly, heterodimer of an alpha and a beta chain.

Its function is as follows. This protein is one of the two subunits of integration host factor, a specific DNA-binding protein that functions in genetic recombination as well as in transcriptional and translational control. The polypeptide is Integration host factor subunit beta (Granulibacter bethesdensis (strain ATCC BAA-1260 / CGDNIH1)).